Reading from the N-terminus, the 236-residue chain is MASSRFQSGFCPISSCPSLENFIERIKDACRFTLSAVLGTILSAVLTFFFALVGTLLGALTGALIGQETESGFIRGAAVGAISGAVFSIEVFESSLVLWKSNESRFGCLLYLIDVIVSLISGRLVRERIGPAMLSAVQSQMGAVDSTFEELSSIFDTGGSKGLTGDLVDKIPKIKITGKNNLDASGNKDSCSVCLQDFQLGETVRSLPHCHHMFHLPCIDNWLFRHGSCPMCRRDL.

Residues 1–44 (MASSRFQSGFCPISSCPSLENFIERIKDACRFTLSAVLGTILSA) are Lumenal, thylakoid-facing. Residues 45 to 65 (VLTFFFALVGTLLGALTGALI) traverse the membrane as a helical segment. The Stromal portion of the chain corresponds to 66–78 (GQETESGFIRGAA). The chain crosses the membrane as a helical span at residues 79-99 (VGAISGAVFSIEVFESSLVLW). At 100–104 (KSNES) the chain is on the lumenal, thylakoid side. A helical transmembrane segment spans residues 105–125 (RFGCLLYLIDVIVSLISGRLV). Residues 126 to 236 (RERIGPAMLS…GSCPMCRRDL (111 aa)) lie on the Stromal side of the membrane. The segment at 191–233 (CSVCLQDFQLGETVRSLPHCHHMFHLPCIDNWLFRHGSCPMCR) adopts an RING-type; atypical zinc-finger fold.

The protein belongs to the RING-type zinc finger family. NIP subfamily. Interacts with RPOT2.

Its subcellular location is the plastid. It is found in the chloroplast thylakoid membrane. Functionally, intrinsic thylakoid membrane protein that fixes RPOT2 on the stromal side of the thylakoid membrane. This chain is NEP1-interacting protein 1 (NIP1), found in Arabidopsis thaliana (Mouse-ear cress).